The sequence spans 256 residues: Type III pantothenate kinase (256 aa).

ATP is bound at residue 6–13 (DCGNTNTV). Substrate is bound at residue 107–110 (GPDR). Asp109 (proton acceptor) is an active-site residue. A K(+)-binding site is contributed by Asp129. ATP is bound at residue Thr132. Residue Thr184 coordinates substrate.

This sequence belongs to the type III pantothenate kinase family. As to quaternary structure, homodimer. Requires NH4(+) as cofactor. K(+) is required as a cofactor.

Its subcellular location is the cytoplasm. It catalyses the reaction (R)-pantothenate + ATP = (R)-4'-phosphopantothenate + ADP + H(+). The protein operates within cofactor biosynthesis; coenzyme A biosynthesis; CoA from (R)-pantothenate: step 1/5. Its function is as follows. Catalyzes the phosphorylation of pantothenate (Pan), the first step in CoA biosynthesis. This is Type III pantothenate kinase from Dinoroseobacter shibae (strain DSM 16493 / NCIMB 14021 / DFL 12).